The following is a 346-amino-acid chain: Cytosolic sulfotransferase 17 (346 aa).

Residue 89 to 94 (KTGTTW) coordinates 3'-phosphoadenylyl sulfate. Histidine 151 functions as the Proton acceptor in the catalytic mechanism. Residues arginine 173, serine 181, tyrosine 239, and 309-311 (RKG) each bind 3'-phosphoadenylyl sulfate.

This sequence belongs to the sulfotransferase 1 family. In terms of tissue distribution, highly expressed in roots, stems and mature leaves. Low expression in young leaves and flowers. Barely detected in siliques.

It localises to the cytoplasm. It carries out the reaction an aliphatic (Z)-desulfo-glucosinolate + 3'-phosphoadenylyl sulfate = a (Z)-omega-(methylsulfanyl)-N-sulfo-alkylhydroximate S-glucoside + adenosine 3',5'-bisphosphate + H(+). With respect to regulation, inhibited by phosphoadenosine 5'-phosphate (PAP). Functionally, sulfotransferase that utilizes 3'-phospho-5'-adenylyl sulfate (PAPS) as sulfonate donor to catalyze the sulfate conjugation of desulfo-glucosinolates (dsGSs), the final step in the biosynthesis of the glucosinolate core structure. Substrate preference is desulfo-benzyl glucosinolate &gt; desulfo-6-methylthiohexyl glucosinolate. Increased specific activity with increasing chain length of desulfo-glucosinolate derived from methionine. Preferred substrate is desulfo-8-methylthiooctyl glucosinolate. This chain is Cytosolic sulfotransferase 17 (SOT17), found in Arabidopsis thaliana (Mouse-ear cress).